The chain runs to 264 residues: Phycocyanobilin:ferredoxin oxidoreductase (264 aa).

It belongs to the HY2 family.

The catalysed reaction is (2R,3Z)-phycocyanobilin + 4 oxidized [2Fe-2S]-[ferredoxin] = biliverdin IXalpha + 4 reduced [2Fe-2S]-[ferredoxin] + 4 H(+). Catalyzes the four-electron reduction of biliverdin IX-alpha (2-electron reduction at both the A and D rings); the reaction proceeds via an isolatable 2-electron intermediate, 181,182-dihydrobiliverdin. This chain is Phycocyanobilin:ferredoxin oxidoreductase (pcyA), found in Prochlorococcus marinus (strain MIT 9313).